The chain runs to 324 residues: Phospho-N-acetylmuramoyl-pentapeptide-transferase (324 aa).

Transmembrane regions (helical) follow at residues 5-25 (VMVL…PLFI), 50-70 (GTPT…TLLM), 77-97 (LSVE…LGFL), 117-137 (LIGQ…SGFS), 147-167 (LSIN…VGGS), 176-196 (LDGL…VLAW), 203-223 (IAIF…FNAH), 227-247 (VFMG…VAIL), 250-270 (LEIL…SVII), and 304-324 (VTFW…EVWI).

It belongs to the glycosyltransferase 4 family. MraY subfamily. The cofactor is Mg(2+).

The protein resides in the cell membrane. It carries out the reaction UDP-N-acetyl-alpha-D-muramoyl-L-alanyl-gamma-D-glutamyl-meso-2,6-diaminopimeloyl-D-alanyl-D-alanine + di-trans,octa-cis-undecaprenyl phosphate = di-trans,octa-cis-undecaprenyl diphospho-N-acetyl-alpha-D-muramoyl-L-alanyl-D-glutamyl-meso-2,6-diaminopimeloyl-D-alanyl-D-alanine + UMP. Its pathway is cell wall biogenesis; peptidoglycan biosynthesis. Functionally, catalyzes the initial step of the lipid cycle reactions in the biosynthesis of the cell wall peptidoglycan: transfers peptidoglycan precursor phospho-MurNAc-pentapeptide from UDP-MurNAc-pentapeptide onto the lipid carrier undecaprenyl phosphate, yielding undecaprenyl-pyrophosphoryl-MurNAc-pentapeptide, known as lipid I. The sequence is that of Phospho-N-acetylmuramoyl-pentapeptide-transferase from Geobacillus sp. (strain WCH70).